Consider the following 354-residue polypeptide: Uroporphyrinogen decarboxylase (354 aa).

Substrate is bound by residues 27-31 (RQAGR), Asp77, Tyr154, Ser209, and His327.

This sequence belongs to the uroporphyrinogen decarboxylase family. Homodimer.

The protein localises to the cytoplasm. The enzyme catalyses uroporphyrinogen III + 4 H(+) = coproporphyrinogen III + 4 CO2. It functions in the pathway porphyrin-containing compound metabolism; protoporphyrin-IX biosynthesis; coproporphyrinogen-III from 5-aminolevulinate: step 4/4. Catalyzes the decarboxylation of four acetate groups of uroporphyrinogen-III to yield coproporphyrinogen-III. This is Uroporphyrinogen decarboxylase from Shewanella piezotolerans (strain WP3 / JCM 13877).